Consider the following 434-residue polypeptide: Methyl-coenzyme M reductase subunit beta (434 aa).

Coenzyme M is bound at residue tyrosine 365. Position 367 (glycine 367) interacts with coenzyme B.

It belongs to the methyl-coenzyme M reductase beta subunit family. In terms of assembly, MCR is a hexamer of two alpha, two beta, and two gamma chains, forming a dimer of heterotrimers. Coenzyme F430 serves as cofactor.

It is found in the cytoplasm. It carries out the reaction coenzyme B + methyl-coenzyme M = methane + coenzyme M-coenzyme B heterodisulfide. The protein operates within one-carbon metabolism; methyl-coenzyme M reduction; methane from methyl-coenzyme M: step 1/1. Component of the methyl-coenzyme M reductase (MCR) I that catalyzes the reductive cleavage of methyl-coenzyme M (CoM-S-CH3 or 2-(methylthio)ethanesulfonate) using coenzyme B (CoB or 7-mercaptoheptanoylthreonine phosphate) as reductant which results in the production of methane and the mixed heterodisulfide of CoB and CoM (CoM-S-S-CoB). This is the final step in methanogenesis. The protein is Methyl-coenzyme M reductase subunit beta (mcrB) of Methanosarcina barkeri (strain Fusaro / DSM 804).